Reading from the N-terminus, the 322-residue chain is Ribosome biogenesis protein RLP7 (322 aa).

Residues 1–16 (MSSTQDSKAQTLNSNP) are compositionally biased toward polar residues. A disordered region spans residues 1-52 (MSSTQDSKAQTLNSNPEILLRKRRNADRTRIERQELAKKKREEQIKKKRSNK). Residue Ser2 is modified to N-acetylserine. At Ser14 the chain carries Phosphoserine. Over residues 26 to 45 (ADRTRIERQELAKKKREEQI) the composition is skewed to basic and acidic residues. Position 120 is a phosphothreonine (Thr120). Ser278 bears the Phosphoserine mark.

The protein belongs to the universal ribosomal protein uL30 family.

The protein localises to the nucleus. It localises to the nucleolus. Functionally, involved in the biogenesis of the 60S ribosomal subunit. May act as a specificity factor that binds precursor rRNAs and tethers the enzymes that carry out the early 5' to 3' exonucleolytic reactions that generate the mature rRNAs. The sequence is that of Ribosome biogenesis protein RLP7 (RLP7) from Saccharomyces cerevisiae (strain ATCC 204508 / S288c) (Baker's yeast).